A 149-amino-acid chain; its full sequence is Transcriptional repressor NrdR (149 aa).

A zinc finger lies at 3–34; sequence CPFCSATDTKVIDSRLVADGHQVRRRRECTLC. Residues 49 to 139 enclose the ATP-cone domain; the sequence is PRVIKRDDTR…VYRAFEDVSQ (91 aa).

This sequence belongs to the NrdR family. Zn(2+) is required as a cofactor.

Functionally, negatively regulates transcription of bacterial ribonucleotide reductase nrd genes and operons by binding to NrdR-boxes. This chain is Transcriptional repressor NrdR, found in Shewanella denitrificans (strain OS217 / ATCC BAA-1090 / DSM 15013).